Consider the following 240-residue polypeptide: Protein GrpE (240 aa).

Polar residues predominate over residues methionine 1–glutamine 13. The tract at residues methionine 1–tryptophan 89 is disordered. Low complexity predominate over residues alanine 20–alanine 38. Positions glutamate 65 to tryptophan 89 are enriched in basic and acidic residues.

This sequence belongs to the GrpE family. As to quaternary structure, homodimer.

It localises to the cytoplasm. Participates actively in the response to hyperosmotic and heat shock by preventing the aggregation of stress-denatured proteins, in association with DnaK and GrpE. It is the nucleotide exchange factor for DnaK and may function as a thermosensor. Unfolded proteins bind initially to DnaJ; upon interaction with the DnaJ-bound protein, DnaK hydrolyzes its bound ATP, resulting in the formation of a stable complex. GrpE releases ADP from DnaK; ATP binding to DnaK triggers the release of the substrate protein, thus completing the reaction cycle. Several rounds of ATP-dependent interactions between DnaJ, DnaK and GrpE are required for fully efficient folding. The protein is Protein GrpE of Halorhodospira halophila (strain DSM 244 / SL1) (Ectothiorhodospira halophila (strain DSM 244 / SL1)).